We begin with the raw amino-acid sequence, 1182 residues long: MVRPLSLGELPPSYTPPARSSAPHILAGSLQAPLWLRAYFQGLLFSLGCRIQKHCGKVLFLGLVAFGALALGLRVAVIETDLEQLWVEVGSRVSQELHYTKEKLGEEAAYTSQMLIQTAHQEGGNVLTPEALDLHLQAALTASKVQVSLYGKSWDLNKICYKSGVPLIENGMIERMIEKLFPCVILTPLDCFWEGAKLQGGSAYLPGRPDIQWTNLDPQQLLEELGPFASLEGFRELLDKAQVGQAYVGRPCLDPDDPHCPPSAPNRHSRQAPNVAQELSGGCHGFSHKFMHWQEELLLGGTARDLQGQLLRAEALQSTFLLMSPRQLYEHFRGDYQTHDIGWSEEQASMVLQAWQRRFVQLAQEALPANASQQIHAFSSTTLDDILRAFSEVSTTRVVGGYLLMLAYACVTMLRWDCAQSQGAVGLAGVLLVALAVASGLGLCALLGITFNAATTQVLPFLALGIGVDDIFLLAHAFTKAPPDTPLPERMGECLRSTGTSVALTSVNNMVAFFMAALVPIPALRAFSLQAAIVVGCNFAAVMLVFPAILSLDLRRRHRQRLDVLCCFSSPCSAQVIQMLPQELGDRAVPVGIAHLTATVQAFTHCEASSQHVVTILPPQAHLLSPASDPLGSELYSPGGSTRDLLSQEEGTGPQAACRPLLCAHWTLAHFARYQFAPLLLQTRAKALVLLFFGALLGLSLYGATLVQDGLALTDVVPRGTKEHAFLSAQLRYFSLYEVALVTQGGFDYAHSQRALFDLHQRFSSLKAVLPPPATQAPRTWLHYYRSWLQGIQAAFDQDWASGRITCHSYRNGSEDGALAYKLLIQTGNAQEPLDFSQLTTRKLVDKEGLIPPELFYMGLTVWVSSDPLGLAASQANFYPPPPEWLHDKYDTTGENLRIPAAQPLEFAQFPFLLHGLQKTADFVEAIEGARAACTEAGQAGVHAYPSGSPFLFWEQYLGLRRCFLLAVCILLVCTFLVCALLLLSPWTAGLIVLVLAMMTVELFGIMGFLGIKLSAIPVVILVASIGIGVEFTVHVALGFLTSHGSRNLRAASALEQTFAPVTDGAVSTLLGLLMLAGSNFDFIIRYFFVVLTVLTLLGLLHGLLLLPVLLSILGPPPQVVQVYKESPQTLNSAAPQRGGLRWDRPPTLPQSFARVTTSMTVALHPPPLPGAYVHPASEEPT.

Topologically, residues M1 to K57 are cytoplasmic. A helical transmembrane segment spans residues V58 to I78. Topologically, residues E79–S394 are extracellular. Residue N370 is glycosylated (N-linked (GlcNAc...) asparagine). In terms of domain architecture, SSD spans S394–L552. A helical transmembrane segment spans residues T395–L414. Topologically, residues R415–A428 are cytoplasmic. A helical transmembrane segment spans residues G429–I449. Residues T450–Q457 lie on the Extracellular side of the membrane. Residues V458 to F478 traverse the membrane as a helical segment. The Cytoplasmic segment spans residues T479–S501. Residues V502–P522 form a helical membrane-spanning segment. Topologically, residues A523–A531 are extracellular. The chain crosses the membrane as a helical span at residues A532 to L552. Over D553 to K686 the chain is Cytoplasmic. Residues A687–V707 traverse the membrane as a helical segment. The Extracellular segment spans residues Q708–C963. N-linked (GlcNAc...) asparagine glycosylation occurs at N812. Residues F964 to L984 traverse the membrane as a helical segment. At S985–L991 the chain is on the cytoplasmic side. Residues I992 to I1012 traverse the membrane as a helical segment. Position 1013 (K1013) is a topological domain, extracellular. A helical membrane pass occupies residues L1014–V1034. The Cytoplasmic portion of the chain corresponds to H1035–D1064. A helical transmembrane segment spans residues G1065 to I1085. R1086 is a topological domain (extracellular). A helical transmembrane segment spans residues Y1087 to L1107. At P1108–T1182 the chain is on the cytoplasmic side.

This sequence belongs to the patched family. Expressed in epithelial cells of the developing hair, tooth and whisker.

The protein localises to the membrane. Its function is as follows. Plays a role in the control of cellular growth. May have a role in epidermal development. May act as a receptor for Sonic hedgehog (SHH). The chain is Protein patched homolog 2 (Ptch2) from Mus musculus (Mouse).